Reading from the N-terminus, the 178-residue chain is ATP synthase subunit delta (178 aa).

The protein belongs to the ATPase delta chain family. As to quaternary structure, F-type ATPases have 2 components, F(1) - the catalytic core - and F(0) - the membrane proton channel. F(1) has five subunits: alpha(3), beta(3), gamma(1), delta(1), epsilon(1). F(0) has three main subunits: a(1), b(2) and c(10-14). The alpha and beta chains form an alternating ring which encloses part of the gamma chain. F(1) is attached to F(0) by a central stalk formed by the gamma and epsilon chains, while a peripheral stalk is formed by the delta and b chains.

It localises to the cell inner membrane. Functionally, f(1)F(0) ATP synthase produces ATP from ADP in the presence of a proton or sodium gradient. F-type ATPases consist of two structural domains, F(1) containing the extramembraneous catalytic core and F(0) containing the membrane proton channel, linked together by a central stalk and a peripheral stalk. During catalysis, ATP synthesis in the catalytic domain of F(1) is coupled via a rotary mechanism of the central stalk subunits to proton translocation. This protein is part of the stalk that links CF(0) to CF(1). It either transmits conformational changes from CF(0) to CF(1) or is implicated in proton conduction. In Acinetobacter baumannii (strain SDF), this protein is ATP synthase subunit delta.